The chain runs to 233 residues: Small ribosomal subunit protein uS3 (233 aa).

Positions 39–108 (IRTALFKLLK…KLIVNVRVIE (70 aa)) constitute a KH type-2 domain.

It belongs to the universal ribosomal protein uS3 family. As to quaternary structure, part of the 30S ribosomal subunit. Forms a tight complex with proteins S10 and S14.

Binds the lower part of the 30S subunit head. Binds mRNA in the 70S ribosome, positioning it for translation. The sequence is that of Small ribosomal subunit protein uS3 from Mycoplasma mycoides subsp. mycoides SC (strain CCUG 32753 / NCTC 10114 / PG1).